The chain runs to 387 residues: Calcium sensing receptor, chloroplastic (387 aa).

The transit peptide at 1 to 33 (MAMAEMATKSSLSAKLTLPSSSTKKTLSLRQVS) directs the protein to the chloroplast. Residues 34-186 (VSLPTSTSIS…TMDTISSADP (153 aa)) lie on the Lumenal, thylakoid side of the membrane. The helical transmembrane segment at 187–207 (SVIVVAAGAAFLAYLLLPPVF) threads the bilayer. Residues 208–387 (SAISFNFRGY…SGTKFLPSSD (180 aa)) are Stromal-facing. A Rhodanese domain is found at 231–352 (CTKNYLMVDI…WLQSRLGTDS (122 aa)). T380 is modified (phosphothreonine).

Post-translationally, phosphorylation seems to be light-dependent. In terms of tissue distribution, predominantly expressed in the shoot, including guard cells.

It localises to the plastid. Its subcellular location is the chloroplast thylakoid membrane. In terms of biological role, modulates cytoplasmic Ca(2+) concentration and is crucial for proper stomatal regulation in response to elevated levels of external Ca(2+). May function by regulating concentrations of inositol 1,4,5-trisphosphate (IP3), which in turn triggers release of Ca(2+) from internal stores. May play a role in de-etiolation. The protein is Calcium sensing receptor, chloroplastic (CAS) of Arabidopsis thaliana (Mouse-ear cress).